A 98-amino-acid chain; its full sequence is Class II hydrophobin 3 (98 aa).

Positions 1–18 (MQFTTTTLIAILSALAVA) are cleaved as a signal peptide. Residues N26 and N54 are each glycosylated (N-linked (GlcNAc...) asparagine). Cystine bridges form between C35/C83, C44/C74, C45/C57, and C84/C95.

The protein belongs to the cerato-ulmin hydrophobin family.

Its subcellular location is the secreted. The protein localises to the cell wall. Functionally, aerial growth, conidiation, and dispersal of filamentous fungi in the environment rely upon a capability of their secreting small amphipathic proteins called hydrophobins (HPBs) with low sequence identity. Class I can self-assemble into an outermost layer of rodlet bundles on aerial cell surfaces, conferring cellular hydrophobicity that supports fungal growth, development and dispersal; whereas Class II form highly ordered films at water-air interfaces through intermolecular interactions but contribute nothing to the rodlet structure. In Botryotinia fuckeliana, hydrophobins are not involved in conferring surface hydrophobicity to conidia and aerial hyphae and their function in sclerotia and fruiting bodies remains to be investigated. This is Class II hydrophobin 3 from Botryotinia fuckeliana (strain B05.10) (Noble rot fungus).